The sequence spans 326 residues: Ribose-phosphate pyrophosphokinase (326 aa).

Residues 45 to 47 (NGE) and 104 to 105 (RQ) contribute to the ATP site. Residues His-138 and Asp-178 each coordinate Mg(2+). Lys-202 is a catalytic residue. Residues Arg-204, Asp-230, and 234 to 238 (DTGGT) contribute to the D-ribose 5-phosphate site.

It belongs to the ribose-phosphate pyrophosphokinase family. Class I subfamily. Homohexamer. It depends on Mg(2+) as a cofactor.

The protein resides in the cytoplasm. It carries out the reaction D-ribose 5-phosphate + ATP = 5-phospho-alpha-D-ribose 1-diphosphate + AMP + H(+). The protein operates within metabolic intermediate biosynthesis; 5-phospho-alpha-D-ribose 1-diphosphate biosynthesis; 5-phospho-alpha-D-ribose 1-diphosphate from D-ribose 5-phosphate (route I): step 1/1. In terms of biological role, involved in the biosynthesis of the central metabolite phospho-alpha-D-ribosyl-1-pyrophosphate (PRPP) via the transfer of pyrophosphoryl group from ATP to 1-hydroxyl of ribose-5-phosphate (Rib-5-P). The chain is Ribose-phosphate pyrophosphokinase from Mycobacterium bovis (strain ATCC BAA-935 / AF2122/97).